Reading from the N-terminus, the 262-residue chain is Carbonic anhydrase 13 (262 aa).

One can recognise an Alpha-carbonic anhydrase domain in the interval 4-261 (LSWGYGEHNG…LKGRRVRASF (258 aa)). H65 acts as the Proton donor/acceptor in catalysis. Positions 95, 97, and 120 each coordinate Zn(2+). 200 to 201 (TV) provides a ligand contact to substrate.

The protein belongs to the alpha-carbonic anhydrase family. Zn(2+) is required as a cofactor. Expressed in spleen, lung, kidney, heart, brain, skeletal muscle and testis.

The enzyme catalyses hydrogencarbonate + H(+) = CO2 + H2O. Inhibited by coumarins, sulfonamide derivatives such as acetazolamide (AZA) and Foscarnet (phosphonoformate trisodium salt). Reversible hydration of carbon dioxide. In Mus musculus (Mouse), this protein is Carbonic anhydrase 13 (Ca13).